We begin with the raw amino-acid sequence, 906 residues long: Disintegrin and metalloproteinase domain-containing protein 22 (906 aa).

Residues 1–25 (MQAAVAVSVPFLLLCVLGTCPPARC) form the signal peptide. The propeptide occupies 26 to 222 (GQAGDASLME…KFILKPRPKR (197 aa)). Residue Asn175 is glycosylated (N-linked (GlcNAc...) asparagine). The Extracellular segment spans residues 223–736 (SKRQLRRYPR…LSGNGVAGTN (514 aa)). Residues 239 to 438 (KYIELMIVND…GGGACLFNKP (200 aa)) form the Peptidase M12B domain. Disulfide bonds link Cys349/Cys433, Cys392/Cys417, Cys394/Cys401, Cys447/Cys477, Cys458/Cys474, Cys460/Cys466, Cys473/Cys494, Cys485/Cys491, Cys490/Cys516, Cys503/Cys523, Cys510/Cys542, Cys535/Cys547, Cys554/Cys605, Cys569/Cys635, Cys583/Cys593, Cys600/Cys663, and Cys657/Cys668. Residues 444 to 531 (PPECGNGFIE…QCAPNIHKMD (88 aa)) enclose the Disintegrin domain. Asn519 carries N-linked (GlcNAc...) asparagine glycosylation. A glycan (N-linked (GlcNAc...) asparagine) is linked at Asn634. Asn675 carries N-linked (GlcNAc...) asparagine glycosylation. The EGF-like domain occupies 675-712 (NFSTCLSSKEGTICSGNGVCSNELKCVCNRHWIGSDCN). 3 disulfides stabilise this stretch: Cys679/Cys694, Cys688/Cys700, and Cys702/Cys711. The chain crosses the membrane as a helical span at residues 737–757 (IIIGIIAGTILVLALILGITA). Residues 758-906 (WGYKNYREQR…QSARLWETSI (149 aa)) lie on the Cytoplasmic side of the membrane. The segment at 785 to 906 (YSDIPPGVST…QSARLWETSI (122 aa)) is disordered. The span at 793–810 (STNSASSSKKRSNGLSHS) shows a compositional bias: low complexity. Position 810 is a phosphoserine (Ser810). Basic and acidic residues predominate over residues 811-829 (WSERIPDTKHISDICENGR). Phosphoserine is present on Ser834. Residues 842–853 (NKKKIRGKRFRP) show a composition bias toward basic residues. Phosphoserine occurs at positions 857, 862, 866, and 870. The segment covering 862 to 877 (SPAKSPSSSTGSIASS) has biased composition (low complexity).

In terms of assembly, interacts with LGI1. Interacts with DLG4/PSD95. Also binds LGI4. Interacts with KCNA2 and DLG2. Interacts with ADAM11. Interacts (via C-terminus) with YWHAB/14-3-3 beta. Interacts (via C-terminus) with YWHAZ/14-3-3 zeta. Post-translationally, the precursor is cleaved by a furin endopeptidase. Highly expressed in the brain and in some high-grade but not low-grade gliomas. Detected slightly or not at all in other tissues.

It is found in the cell membrane. The protein localises to the cell projection. The protein resides in the axon. In terms of biological role, probable ligand for integrin in the brain. This is a non catalytic metalloprotease-like protein. Involved in regulation of cell adhesion and spreading and in inhibition of cell proliferation. Neuronal receptor for LGI1. This Homo sapiens (Human) protein is Disintegrin and metalloproteinase domain-containing protein 22 (ADAM22).